We begin with the raw amino-acid sequence, 191 residues long: dCTP deaminase (191 aa).

Residues 112-117 (KSTYAR), 136-138 (TLE), glutamine 157, tyrosine 173, and glutamine 183 each bind dCTP. Catalysis depends on glutamate 138, which acts as the Proton donor/acceptor.

It belongs to the dCTP deaminase family. As to quaternary structure, homotrimer.

The enzyme catalyses dCTP + H2O + H(+) = dUTP + NH4(+). The protein operates within pyrimidine metabolism; dUMP biosynthesis; dUMP from dCTP (dUTP route): step 1/2. Catalyzes the deamination of dCTP to dUTP. The protein is dCTP deaminase of Psychrobacter sp. (strain PRwf-1).